The chain runs to 30 residues: Alanine carboxypeptidase (30 aa).

It catalyses the reaction Release of a C-terminal alanine from a peptide or a variety of pteroyl or acyl groups.. In Geobacillus stearothermophilus (Bacillus stearothermophilus), this protein is Alanine carboxypeptidase.